Reading from the N-terminus, the 158-residue chain is 6,7-dimethyl-8-ribityllumazine synthase (158 aa).

Residues Phe23, 61–63 (SFE), and 85–87 (AVI) contribute to the 5-amino-6-(D-ribitylamino)uracil site. 90–91 (DT) provides a ligand contact to (2S)-2-hydroxy-3-oxobutyl phosphate. The active-site Proton donor is His93. A 5-amino-6-(D-ribitylamino)uracil-binding site is contributed by Phe118. A (2S)-2-hydroxy-3-oxobutyl phosphate-binding site is contributed by Arg132.

The protein belongs to the DMRL synthase family.

The catalysed reaction is (2S)-2-hydroxy-3-oxobutyl phosphate + 5-amino-6-(D-ribitylamino)uracil = 6,7-dimethyl-8-(1-D-ribityl)lumazine + phosphate + 2 H2O + H(+). It functions in the pathway cofactor biosynthesis; riboflavin biosynthesis; riboflavin from 2-hydroxy-3-oxobutyl phosphate and 5-amino-6-(D-ribitylamino)uracil: step 1/2. In terms of biological role, catalyzes the formation of 6,7-dimethyl-8-ribityllumazine by condensation of 5-amino-6-(D-ribitylamino)uracil with 3,4-dihydroxy-2-butanone 4-phosphate. This is the penultimate step in the biosynthesis of riboflavin. The protein is 6,7-dimethyl-8-ribityllumazine synthase of Prochlorococcus marinus (strain NATL2A).